We begin with the raw amino-acid sequence, 287 residues long: ADP-dependent (S)-NAD(P)H-hydrate dehydratase (287 aa).

Residues 7-283 (GEDDVRKFVP…ELLPSVMKPF (277 aa)) form the YjeF C-terminal domain. Positions 42 and 159 each coordinate (6S)-NADPHX. AMP contacts are provided by residues 196–200 (KGPTD) and Gly224. Asp225 contributes to the (6S)-NADPHX binding site.

Belongs to the NnrD/CARKD family. As to quaternary structure, homotetramer. The cofactor is Mg(2+).

It carries out the reaction (6S)-NADHX + ADP = AMP + phosphate + NADH + H(+). The enzyme catalyses (6S)-NADPHX + ADP = AMP + phosphate + NADPH + H(+). In terms of biological role, catalyzes the dehydration of the S-form of NAD(P)HX at the expense of ADP, which is converted to AMP. Together with NAD(P)HX epimerase, which catalyzes the epimerization of the S- and R-forms, the enzyme allows the repair of both epimers of NAD(P)HX, a damaged form of NAD(P)H that is a result of enzymatic or heat-dependent hydration. This Cenarchaeum symbiosum (strain A) protein is ADP-dependent (S)-NAD(P)H-hydrate dehydratase.